Here is a 325-residue protein sequence, read N- to C-terminus: tRNA U34 carboxymethyltransferase (325 aa).

Carboxy-S-adenosyl-L-methionine contacts are provided by residues K91, W105, K110, G130, 152–154 (DPS), 181–182 (ME), M197, Y201, and R316.

The protein belongs to the class I-like SAM-binding methyltransferase superfamily. CmoB family. As to quaternary structure, homotetramer.

It catalyses the reaction carboxy-S-adenosyl-L-methionine + 5-hydroxyuridine(34) in tRNA = 5-carboxymethoxyuridine(34) in tRNA + S-adenosyl-L-homocysteine + H(+). Catalyzes carboxymethyl transfer from carboxy-S-adenosyl-L-methionine (Cx-SAM) to 5-hydroxyuridine (ho5U) to form 5-carboxymethoxyuridine (cmo5U) at position 34 in tRNAs. The chain is tRNA U34 carboxymethyltransferase from Saccharophagus degradans (strain 2-40 / ATCC 43961 / DSM 17024).